Consider the following 719-residue polypeptide: Fatty acid oxidation complex subunit alpha (719 aa).

The segment at 1 to 190 (MVYQGNRITV…KLGLVDATVA (190 aa)) is enoyl-CoA hydratase/isomerase. Asp298 contacts substrate. Residues 313–719 (HDINEAAVLG…AAGETFYATA (407 aa)) form a 3-hydroxyacyl-CoA dehydrogenase region. NAD(+)-binding positions include Met326, Asp345, 402-404 (VVE), Lys409, and Ser431. The active-site For 3-hydroxyacyl-CoA dehydrogenase activity is the His452. Asn455 contacts NAD(+). Asn502 lines the substrate pocket.

The protein in the N-terminal section; belongs to the enoyl-CoA hydratase/isomerase family. It in the C-terminal section; belongs to the 3-hydroxyacyl-CoA dehydrogenase family. In terms of assembly, heterotetramer of two alpha chains (FadB) and two beta chains (FadA).

It catalyses the reaction a (3S)-3-hydroxyacyl-CoA + NAD(+) = a 3-oxoacyl-CoA + NADH + H(+). The enzyme catalyses a (3S)-3-hydroxyacyl-CoA = a (2E)-enoyl-CoA + H2O. It carries out the reaction a 4-saturated-(3S)-3-hydroxyacyl-CoA = a (3E)-enoyl-CoA + H2O. The catalysed reaction is (3S)-3-hydroxybutanoyl-CoA = (3R)-3-hydroxybutanoyl-CoA. It catalyses the reaction a (3Z)-enoyl-CoA = a 4-saturated (2E)-enoyl-CoA. The enzyme catalyses a (3E)-enoyl-CoA = a 4-saturated (2E)-enoyl-CoA. Its pathway is lipid metabolism; fatty acid beta-oxidation. Its function is as follows. Involved in the aerobic and anaerobic degradation of long-chain fatty acids via beta-oxidation cycle. Catalyzes the formation of 3-oxoacyl-CoA from enoyl-CoA via L-3-hydroxyacyl-CoA. It can also use D-3-hydroxyacyl-CoA and cis-3-enoyl-CoA as substrate. The protein is Fatty acid oxidation complex subunit alpha of Psychrobacter cryohalolentis (strain ATCC BAA-1226 / DSM 17306 / VKM B-2378 / K5).